A 211-amino-acid polypeptide reads, in one-letter code: MVKLSCGPILLALVLCISLTSVANAQQCGRQRGGALCGNNLCCSQFGWCGSTPEYCSPSQGCQSQCTGSGPDPGQGGSAQNVRATYHIYNPQNVGWDLNAVSAYCSTWDANKPYAWRSKYGWTAFCGPVGPRGRDSCGKCLRVTNTRTGAQTTVRIVDQCSNGGLDLDINVFQQIDTDGVGNQQGHLIVNYQFVNCGDNVNVPLLSVVDKE.

The first 25 residues, 1-25, serve as a signal peptide directing secretion; sequence MVKLSCGPILLALVLCISLTSVANA. The Chitin-binding type-1 domain maps to 26–68; sequence QQCGRQRGGALCGNNLCCSQFGWCGSTPEYCSPSQGCQSQCTG. 4 disulfides stabilise this stretch: Cys28–Cys43, Cys37–Cys49, Cys42–Cys56, and Cys62–Cys66. The 122-residue stretch at 77–198 folds into the Barwin domain; sequence GSAQNVRATY…VNYQFVNCGD (122 aa).

This Solanum tuberosum (Potato) protein is Wound-induced protein WIN2 (WIN2).